Reading from the N-terminus, the 252-residue chain is Cell division protein ZapD (252 aa).

The protein belongs to the ZapD family. As to quaternary structure, interacts with FtsZ.

It localises to the cytoplasm. Its function is as follows. Cell division factor that enhances FtsZ-ring assembly. Directly interacts with FtsZ and promotes bundling of FtsZ protofilaments, with a reduction in FtsZ GTPase activity. In Cupriavidus metallidurans (strain ATCC 43123 / DSM 2839 / NBRC 102507 / CH34) (Ralstonia metallidurans), this protein is Cell division protein ZapD.